Reading from the N-terminus, the 323-residue chain is MVTILDTINPDAKRVRHPEKAHRPDTEVMRKPDWIRVKAPTSKGYAETRAIVKEHKLVTVCEEAGCPNIGECWDKKHATFMIMGEICTRACAFCNVATGKPNALDMAEPENVAKAVKEMGLSHVVITSVDRDDLEDGGAEHFEKVIWAIRAASPATTIEILTPDFLKKPGALERVVAAKPDVFNHNMETVPGNYLTVRPGARYFHSIRLLQRVKELDPTMFTKSGIMVGLGEERNEVLQLMDDLRTADVDFLTIGQYLQPTRKHHKVESFVTPDEFKSYETVAYSKGFLMVASSPLTRSSHHAGDDFARLRAAREKKLLMAAE.

[4Fe-4S] cluster contacts are provided by C61, C66, C72, C87, C91, C94, and S300. Residues 73–289 (WDKKHATFMI…ETVAYSKGFL (217 aa)) enclose the Radical SAM core domain.

Belongs to the radical SAM superfamily. Lipoyl synthase family. It depends on [4Fe-4S] cluster as a cofactor.

The protein resides in the cytoplasm. The enzyme catalyses [[Fe-S] cluster scaffold protein carrying a second [4Fe-4S](2+) cluster] + N(6)-octanoyl-L-lysyl-[protein] + 2 oxidized [2Fe-2S]-[ferredoxin] + 2 S-adenosyl-L-methionine + 4 H(+) = [[Fe-S] cluster scaffold protein] + N(6)-[(R)-dihydrolipoyl]-L-lysyl-[protein] + 4 Fe(3+) + 2 hydrogen sulfide + 2 5'-deoxyadenosine + 2 L-methionine + 2 reduced [2Fe-2S]-[ferredoxin]. Its pathway is protein modification; protein lipoylation via endogenous pathway; protein N(6)-(lipoyl)lysine from octanoyl-[acyl-carrier-protein]: step 2/2. Its function is as follows. Catalyzes the radical-mediated insertion of two sulfur atoms into the C-6 and C-8 positions of the octanoyl moiety bound to the lipoyl domains of lipoate-dependent enzymes, thereby converting the octanoylated domains into lipoylated derivatives. The protein is Lipoyl synthase of Rhizobium leguminosarum bv. trifolii (strain WSM2304).